The sequence spans 2610 residues: E3 ubiquitin-protein ligase HECTD1 (2610 aa).

The disordered stretch occupies residues 246 to 269 (TVSGPSSACKPGRSTTGAPSTTAD). A compositionally biased stretch (polar residues) spans 258 to 269 (RSTTGAPSTTAD). 4 ANK repeats span residues 395–424 (VGQT…DVNR), 426–455 (QRSS…NPDL), 459–491 (DGKT…PVNK), and 579–612 (ITAT…DIFL). The segment at 489–513 (VNKGDDKKKKDTNKDEEECNEPKGD) is disordered. Positions 491–501 (KGDDKKKKDTN) are enriched in basic and acidic residues. Disordered stretches follow at residues 627–657 (LAGP…ELQQ) and 707–748 (SSGS…LSAP). Residues Ser-631 and Ser-640 each carry the phosphoserine modification. The span at 639–657 (ESKPEKEDEPQEDAKELQQ) shows a compositional bias: basic and acidic residues. Low complexity predominate over residues 707-717 (SSGSPEGGSDS). Residues 718-729 (SESRSEFLEKLQ) are compositionally biased toward basic and acidic residues. The MIB/HERC2 domain maps to 1266–1338 (VRSQVLKYMV…KFDLKLAPGY (73 aa)). Disordered regions lie at residues 1343–1406 (VASP…KTER) and 1433–1483 (ENVP…SMGI). Residues 1348 to 1365 (PVSSTVSGTTQSWSSLVK) are compositionally biased toward polar residues. Composition is skewed to low complexity over residues 1373-1395 (SAAA…ASSS) and 1441-1458 (GSSS…TGSE). Residue Ser-1384 is modified to Phosphoserine. Residues 1469-1479 (SVRTPGESSAI) are compositionally biased toward polar residues. The residue at position 1488 (Ser-1488) is a Phosphoserine. Positions 1496–1515 (ELTNKEAASQRPLSSSASNR) are disordered. Ser-1567 is subject to Phosphoserine. Disordered regions lie at residues 1592–1611 (GAQS…VTMS) and 1674–1757 (ELDD…KGGR). Residues 1600–1611 (TTPGTTSTVTMS) are compositionally biased toward low complexity. Residues 1674 to 1703 (ELDDDEDLPEPDEEDDENEDDNQEDQEYEE) show a composition bias toward acidic residues. Residue Thr-1760 is modified to Phosphothreonine. A Phosphoserine modification is found at Ser-1772. The segment at 1777-1797 (AFDPRPGRTNVQQTTDLEIPP) is disordered. Residues 2029–2103 (FTFPPDEFTS…AIVWLQNRRE (75 aa)) are K-box. The region spanning 2151-2610 (IHADRKSVLE…ATMEKGFHLN (460 aa)) is the HECT domain. The segment at 2297-2318 (HCTESQSEASTEEGHDSLSVGS) is disordered. Position 2318 is a phosphoserine (Ser-2318). The active-site Glycyl thioester intermediate is the Cys-2579.

It belongs to the UPL family. K-HECT subfamily. In terms of assembly, interacts with IGSF1.

The catalysed reaction is S-ubiquitinyl-[E2 ubiquitin-conjugating enzyme]-L-cysteine + [acceptor protein]-L-lysine = [E2 ubiquitin-conjugating enzyme]-L-cysteine + N(6)-ubiquitinyl-[acceptor protein]-L-lysine.. The protein operates within protein modification; protein ubiquitination. Its function is as follows. E3 ubiquitin-protein ligase which accepts ubiquitin from an E2 ubiquitin-conjugating enzyme in the form of a thioester and then directly transfers the ubiquitin to targeted substrates. Mediates 'Lys-63'-linked polyubiquitination of HSP90AA1 which leads to its intracellular localization and reduced secretion. Negatively regulating HSP90AA1 secretion in cranial mesenchyme cells may impair their emigration and may be essential for the correct development of the cranial neural folds and neural tube closure. Catalyzes ubiquitination and degradation of ZNF622, an assembly factor for the ribosomal 60S subunit, in hematopoietic cells, thereby promoting hematopoietic stem cell renewal. The sequence is that of E3 ubiquitin-protein ligase HECTD1 from Homo sapiens (Human).